We begin with the raw amino-acid sequence, 225 residues long: MKHVAPPPTAEAVFGDRLPLAQRYAEFLATAGVERGLIGPRETDRIWDRHILNSAALGESVESGDRIADIGSGAGLPGIPLALARPDVHVTLIEPMQRRCEFLTEVVDALGVAVIVVRGRAENPAVRREVGEMDVVTSRAVGSLDKLATWSMGILREGGRMLALKGARAEAEIEENRRVLARAGAVDVRVLRCGADYLNPPATVVEARRATPSNGRGRPGRSSRR.

S-adenosyl-L-methionine contacts are provided by residues glycine 71, leucine 76, alanine 121 to glutamate 122, and arginine 139. Residues valine 204–arginine 225 form a disordered region.

It belongs to the methyltransferase superfamily. RNA methyltransferase RsmG family.

It is found in the cytoplasm. Its function is as follows. Specifically methylates the N7 position of guanine in position 518 of 16S rRNA. The polypeptide is Ribosomal RNA small subunit methyltransferase G (Mycobacterium sp. (strain KMS)).